A 539-amino-acid polypeptide reads, in one-letter code: Phosphoenolpyruvate carboxykinase (ATP) (539 aa).

Arginine 64, tyrosine 206, and lysine 212 together coordinate substrate. Residues lysine 212, histidine 231, and 247–255 (GLSGTGKTT) contribute to the ATP site. Mn(2+) contacts are provided by lysine 212 and histidine 231. Aspartate 268 contacts Mn(2+). Residues glutamate 296, arginine 332, 448–449 (RI), and threonine 454 contribute to the ATP site. Substrate is bound at residue arginine 332.

Belongs to the phosphoenolpyruvate carboxykinase (ATP) family. In terms of assembly, monomer. Requires Mn(2+) as cofactor.

It localises to the cytoplasm. It catalyses the reaction oxaloacetate + ATP = phosphoenolpyruvate + ADP + CO2. The protein operates within carbohydrate biosynthesis; gluconeogenesis. In terms of biological role, involved in the gluconeogenesis. Catalyzes the conversion of oxaloacetate (OAA) to phosphoenolpyruvate (PEP) through direct phosphoryl transfer between the nucleoside triphosphate and OAA. The sequence is that of Phosphoenolpyruvate carboxykinase (ATP) from Yersinia pestis bv. Antiqua (strain Antiqua).